The primary structure comprises 178 residues: Gamma-crystallin M1 (178 aa).

2 Beta/gamma crystallin 'Greek key' domains span residues 2 to 40 (GKIIFYDDRNFQGRSYDCMSDCSDISSYLSRVGSIRVES) and 41 to 86 (GCFM…RMIP). The tract at residues 87–91 (PYRGS) is connecting peptide. 2 consecutive Beta/gamma crystallin 'Greek key' domains span residues 92–132 (YRMR…HVMD) and 133–175 (GHWL…RRIT).

The protein belongs to the beta/gamma-crystallin family. In terms of assembly, monomer.

Its function is as follows. Crystallins are the dominant structural components of the vertebrate eye lens. This chain is Gamma-crystallin M1, found in Cyprinus carpio (Common carp).